An 82-amino-acid polypeptide reads, in one-letter code: Sec-independent protein translocase protein TatA (82 aa).

A helical transmembrane segment spans residues 1–21; the sequence is MHPPSITQLLIILLIIVLLFG. The tract at residues 42–82 is disordered; the sequence is AVKEDEEDNQSEENTKSQIKQSESKNENVSKTHTDSQKQDT. Residues 63–82 are compositionally biased toward basic and acidic residues; the sequence is SESKNENVSKTHTDSQKQDT.

Belongs to the TatA/E family. The Tat system comprises two distinct complexes: a TatABC complex, containing multiple copies of TatA, TatB and TatC subunits, and a separate TatA complex, containing only TatA subunits. Substrates initially bind to the TatABC complex, which probably triggers association of the separate TatA complex to form the active translocon.

The protein localises to the cell inner membrane. Functionally, part of the twin-arginine translocation (Tat) system that transports large folded proteins containing a characteristic twin-arginine motif in their signal peptide across membranes. TatA could form the protein-conducting channel of the Tat system. This is Sec-independent protein translocase protein TatA from Helicobacter hepaticus (strain ATCC 51449 / 3B1).